Reading from the N-terminus, the 167-residue chain is Large ribosomal subunit protein uL10 (167 aa).

This sequence belongs to the universal ribosomal protein uL10 family. Part of the ribosomal stalk of the 50S ribosomal subunit. The N-terminus interacts with L11 and the large rRNA to form the base of the stalk. The C-terminus forms an elongated spine to which L12 dimers bind in a sequential fashion forming a multimeric L10(L12)X complex.

Forms part of the ribosomal stalk, playing a central role in the interaction of the ribosome with GTP-bound translation factors. The polypeptide is Large ribosomal subunit protein uL10 (Mycoplasma mobile (strain ATCC 43663 / 163K / NCTC 11711) (Mesomycoplasma mobile)).